The chain runs to 924 residues: TBC1 domain family member 30 (924 aa).

Positions 1 to 11 (MDVLPTGGGRP) are enriched in gly residues. 2 disordered regions span residues 1 to 76 (MDVL…GRTS) and 94 to 134 (EEEE…RSGA). A compositionally biased stretch (basic and acidic residues) spans 47–59 (GAAERPRRSRDTW). The Rab-GAP TBC domain occupies 249–457 (GIPKEWRRKV…KIWDSVFFEG (209 aa)). Disordered stretches follow at residues 541–564 (KPTS…PDDE), 776–806 (GCTA…PVFG), and 838–924 (HPPC…TKKR). Over residues 555-564 (SDEENDPDDE) the composition is skewed to acidic residues. Position 800 is a phosphoserine (Ser800). Polar residues predominate over residues 858-870 (TSKAPQGSNSKTP). Positions 914-924 (PGGGNSGTKKR) are enriched in gly residues.

It is found in the cell membrane. Its function is as follows. May act as a GTPase-activating protein for Rab family protein(s). This chain is TBC1 domain family member 30 (TBC1D30), found in Homo sapiens (Human).